The following is a 504-amino-acid chain: Probable protein phosphatase 2C 18 (504 aa).

The segment at 1 to 49 (MGLCYSVDRTTGKEPGEASSTATTAETVEERSGSGRWRRPRDLKGGGDI) is disordered. Over residues 17–26 (EASSTATTAE) the composition is skewed to low complexity. In terms of domain architecture, PPM-type phosphatase spans 67 to 399 (IACLYTQQGK…DDCTVVCLFL (333 aa)). The Mn(2+) site is built by D103, G104, D344, and D390. The disordered stretch occupies residues 410–435 (TNVKKDSPKEESIESVTNSTSKEEDE). A compositionally biased stretch (basic and acidic residues) spans 412 to 421 (VKKDSPKEES).

The protein belongs to the PP2C family. It depends on Mg(2+) as a cofactor. Mn(2+) serves as cofactor.

The catalysed reaction is O-phospho-L-seryl-[protein] + H2O = L-seryl-[protein] + phosphate. The enzyme catalyses O-phospho-L-threonyl-[protein] + H2O = L-threonyl-[protein] + phosphate. This Arabidopsis thaliana (Mouse-ear cress) protein is Probable protein phosphatase 2C 18.